We begin with the raw amino-acid sequence, 339 residues long: Holliday junction branch migration complex subunit RuvB (339 aa).

The large ATPase domain (RuvB-L) stretch occupies residues 2–187 (KDVNDEERII…FGIIEHMQYY (186 aa)). ATP-binding positions include L26, R27, G68, K71, T72, T73, 134–136 (EDF), R177, Y187, and R224. T72 serves as a coordination point for Mg(2+). Residues 188–258 (SIDDLEKIIQ…TTKHSLHLLE (71 aa)) form a small ATPAse domain (RuvB-S) region. The head domain (RuvB-H) stretch occupies residues 261–339 (DEGLDQTDRK…QLGYPPKKAE (79 aa)). Residues R316 and R321 each contribute to the DNA site.

The protein belongs to the RuvB family. As to quaternary structure, homohexamer. Forms an RuvA(8)-RuvB(12)-Holliday junction (HJ) complex. HJ DNA is sandwiched between 2 RuvA tetramers; dsDNA enters through RuvA and exits via RuvB. An RuvB hexamer assembles on each DNA strand where it exits the tetramer. Each RuvB hexamer is contacted by two RuvA subunits (via domain III) on 2 adjacent RuvB subunits; this complex drives branch migration. In the full resolvosome a probable DNA-RuvA(4)-RuvB(12)-RuvC(2) complex forms which resolves the HJ.

The protein localises to the cytoplasm. It catalyses the reaction ATP + H2O = ADP + phosphate + H(+). The RuvA-RuvB-RuvC complex processes Holliday junction (HJ) DNA during genetic recombination and DNA repair, while the RuvA-RuvB complex plays an important role in the rescue of blocked DNA replication forks via replication fork reversal (RFR). RuvA specifically binds to HJ cruciform DNA, conferring on it an open structure. The RuvB hexamer acts as an ATP-dependent pump, pulling dsDNA into and through the RuvAB complex. RuvB forms 2 homohexamers on either side of HJ DNA bound by 1 or 2 RuvA tetramers; 4 subunits per hexamer contact DNA at a time. Coordinated motions by a converter formed by DNA-disengaged RuvB subunits stimulates ATP hydrolysis and nucleotide exchange. Immobilization of the converter enables RuvB to convert the ATP-contained energy into a lever motion, pulling 2 nucleotides of DNA out of the RuvA tetramer per ATP hydrolyzed, thus driving DNA branch migration. The RuvB motors rotate together with the DNA substrate, which together with the progressing nucleotide cycle form the mechanistic basis for DNA recombination by continuous HJ branch migration. Branch migration allows RuvC to scan DNA until it finds its consensus sequence, where it cleaves and resolves cruciform DNA. The sequence is that of Holliday junction branch migration complex subunit RuvB from Lactobacillus gasseri (strain ATCC 33323 / DSM 20243 / BCRC 14619 / CIP 102991 / JCM 1131 / KCTC 3163 / NCIMB 11718 / NCTC 13722 / AM63).